The chain runs to 196 residues: Large ribosomal subunit protein bL25 (196 aa).

Belongs to the bacterial ribosomal protein bL25 family. CTC subfamily. As to quaternary structure, part of the 50S ribosomal subunit; part of the 5S rRNA/L5/L18/L25 subcomplex. Contacts the 5S rRNA. Binds to the 5S rRNA independently of L5 and L18.

In terms of biological role, this is one of the proteins that binds to the 5S RNA in the ribosome where it forms part of the central protuberance. This Treponema pallidum subsp. pallidum (strain SS14) protein is Large ribosomal subunit protein bL25.